The following is an 80-amino-acid chain: Exodeoxyribonuclease 7 small subunit (80 aa).

It belongs to the XseB family. As to quaternary structure, heterooligomer composed of large and small subunits.

It is found in the cytoplasm. It catalyses the reaction Exonucleolytic cleavage in either 5'- to 3'- or 3'- to 5'-direction to yield nucleoside 5'-phosphates.. Its function is as follows. Bidirectionally degrades single-stranded DNA into large acid-insoluble oligonucleotides, which are then degraded further into small acid-soluble oligonucleotides. This is Exodeoxyribonuclease 7 small subunit from Salmonella paratyphi B (strain ATCC BAA-1250 / SPB7).